A 93-amino-acid chain; its full sequence is Uteroglobin (93 aa).

A signal peptide spans 1 to 17; sequence MKLAITIILVMLSVCYS.

This sequence belongs to the secretoglobin family. In terms of assembly, antiparallel homodimer; disulfide-linked. Interaction with LMBR1L is controversial.

It is found in the secreted. Functionally, binds phosphatidylcholine, phosphatidylinositol, polychlorinated biphenyls (PCB) and weakly progesterone, potent inhibitor of phospholipase A2. The sequence is that of Uteroglobin (SCGB1A1) from Neotomodon alstoni (Mexican volcano mouse).